Consider the following 725-residue polypeptide: Catalase-peroxidase (725 aa).

The tryptophyl-tyrosyl-methioninium (Trp-Tyr) (with M-252) cross-link spans 98-226 (WHMAGSYRTS…LAAVQMGLIY (129 aa)). Residue His-99 is the Proton acceptor of the active site. Positions 226 to 252 (YVNPEGVNGKSDPQATAYQMRETFARM) form a cross-link, tryptophyl-tyrosyl-methioninium (Tyr-Met) (with W-98). His-267 serves as a coordination point for heme b.

It belongs to the peroxidase family. Peroxidase/catalase subfamily. Homodimer or homotetramer. It depends on heme b as a cofactor. Post-translationally, formation of the three residue Trp-Tyr-Met cross-link is important for the catalase, but not the peroxidase activity of the enzyme.

It carries out the reaction H2O2 + AH2 = A + 2 H2O. It catalyses the reaction 2 H2O2 = O2 + 2 H2O. Bifunctional enzyme with both catalase and broad-spectrum peroxidase activity. The protein is Catalase-peroxidase of Paracoccus denitrificans (strain Pd 1222).